A 144-amino-acid polypeptide reads, in one-letter code: Large ribosomal subunit protein uL11 (144 aa).

This sequence belongs to the universal ribosomal protein uL11 family. In terms of assembly, part of the ribosomal stalk of the 50S ribosomal subunit. Interacts with L10 and the large rRNA to form the base of the stalk. L10 forms an elongated spine to which L12 dimers bind in a sequential fashion forming a multimeric L10(L12)X complex. Post-translationally, one or more lysine residues are methylated.

In terms of biological role, forms part of the ribosomal stalk which helps the ribosome interact with GTP-bound translation factors. This is Large ribosomal subunit protein uL11 from Streptomyces avermitilis (strain ATCC 31267 / DSM 46492 / JCM 5070 / NBRC 14893 / NCIMB 12804 / NRRL 8165 / MA-4680).